The primary structure comprises 23 residues: Phallacidin proprotein (23 aa).

Proline 1 is a propeptide. Residues alanine 2–proline 8 constitute a cross-link (cyclopeptide (Ala-Pro)). The 2'-cysteinyl-6'-hydroxytryptophan sulfoxide (Trp-Cys) cross-link spans tryptophan 3 to cysteine 7. Residues cysteine 9 to lysine 23 constitute a propeptide that is removed on maturation.

This sequence belongs to the MSDIN fungal toxin family. In terms of processing, processed by the macrocyclase-peptidase enzyme POPB to yield a toxic cyclic heptapeptide. POPB first removes 10 residues from the N-terminus. Conformational trapping of the remaining peptide forces the enzyme to release this intermediate rather than proceed to macrocyclization. The enzyme rebinds the remaining peptide in a different conformation and catalyzes macrocyclization of the N-terminal 7 residues.

In terms of biological role, major toxin that belongs to the bicyclic heptapeptides called phallotoxins. Although structurally related to amatoxins, phallotoxins have a different mode of action, which is the stabilization of F-actin. Phallotoxins are poisonous when administered parenterally, but not orally because of poor absorption. This chain is Phallacidin proprotein, found in Amanita fuliginea (East Asian brown death cap).